Consider the following 89-residue polypeptide: Large ribosomal subunit protein bL27 (89 aa).

Residues Met1–Phe26 are disordered.

This sequence belongs to the bacterial ribosomal protein bL27 family.

The protein is Large ribosomal subunit protein bL27 of Maridesulfovibrio salexigens (strain ATCC 14822 / DSM 2638 / NCIMB 8403 / VKM B-1763) (Desulfovibrio salexigens).